Consider the following 226-residue polypeptide: V-type proton ATPase subunit E (226 aa).

Belongs to the V-ATPase E subunit family. As to quaternary structure, V-ATPase is a heteromultimeric enzyme composed of a peripheral catalytic V1 complex (components A to H) attached to an integral membrane V0 proton pore complex (components: a, c, c', c'', d, e, f and VOA1).

It localises to the vacuole membrane. Its function is as follows. Subunit of the V1 complex of vacuolar(H+)-ATPase (V-ATPase), a multisubunit enzyme composed of a peripheral complex (V1) that hydrolyzes ATP and a membrane integral complex (V0) that translocates protons. V-ATPase is responsible for acidifying and maintaining the pH of intracellular compartments. The chain is V-type proton ATPase subunit E (VMA4) from Candida albicans (Yeast).